The primary structure comprises 159 residues: Eukaryotic translation initiation factor 5A (159 aa).

Lys-55 carries the hypusine modification.

It belongs to the eIF-5A family. Lys-55 undergoes hypusination, a unique post-translational modification that consists in the addition of a butylamino group from spermidine to lysine side chain, leading to the formation of the unusual amino acid hypusine. eIF-5As are the only known proteins to undergo this modification, which is essential for their function.

The protein resides in the cytoplasm. Functionally, translation factor that promotes translation elongation and termination, particularly upon ribosome stalling at specific amino acid sequence contexts. Binds between the exit (E) and peptidyl (P) site of the ribosome and promotes rescue of stalled ribosome: specifically required for efficient translation of polyproline-containing peptides as well as other motifs that stall the ribosome. Acts as a ribosome quality control (RQC) cofactor by joining the RQC complex to facilitate peptidyl transfer during CAT tailing step. This chain is Eukaryotic translation initiation factor 5A (eif5a), found in Dictyostelium discoideum (Social amoeba).